We begin with the raw amino-acid sequence, 423 residues long: Phosphoribosylamine--glycine ligase (423 aa).

Residues 107-314 (KAFMAKYNIP…LSDLVEAAID (208 aa)) enclose the ATP-grasp domain. An ATP-binding site is contributed by 133–194 (VNQKGAPIVI…EDFLQGEEAS (62 aa)). Mg(2+) contacts are provided by Glu-284 and Asn-286.

It belongs to the GARS family. Requires Mg(2+) as cofactor. Mn(2+) serves as cofactor.

The enzyme catalyses 5-phospho-beta-D-ribosylamine + glycine + ATP = N(1)-(5-phospho-beta-D-ribosyl)glycinamide + ADP + phosphate + H(+). It participates in purine metabolism; IMP biosynthesis via de novo pathway; N(1)-(5-phospho-D-ribosyl)glycinamide from 5-phospho-alpha-D-ribose 1-diphosphate: step 2/2. This is Phosphoribosylamine--glycine ligase from Neisseria meningitidis serogroup B (strain ATCC BAA-335 / MC58).